We begin with the raw amino-acid sequence, 370 residues long: MEFTLIKQDGAARRGTVSLAHGDVQTPAFMPVGTYGAVKSLSPVEVRDTGAHILLGNTFHLWLRPGLEVIGEFGGLHRFMGWNGPILTDSGGFQVWSLGDLRKITEEGVRFRSPINGDSCFLTPEESMRIQKVLNSDIVMIFDECTPYPATPADARDSMLLSLRWAARSKAAHQGNPNALFGIIQGGMYEDLRDESLAGLTEIGFDGYAIGGLSVGEPKEDMLRILAHTTPKMPQDKPRYLMGVGTPEDLVAAVSHGVDMFDCVMPTRNARNGWLFTRHGDIKLKNARHRKDTRPLDEHCQCYTCLNFSRAYLHHLHRSGEILGARLNTIHNLHYYQELMLGMRQAIEQGRFEAFATEFRQGRQMLQQSA.

The Proton acceptor role is filled by aspartate 89. Substrate contacts are provided by residues 89-93 (DSGGF), aspartate 143, glutamine 185, and glycine 212. The tract at residues 243–249 (GVGTPED) is RNA binding. Aspartate 262 serves as the catalytic Nucleophile. The segment at 267-271 (TRNAR) is RNA binding; important for wobble base 34 recognition. The Zn(2+) site is built by cysteine 300, cysteine 302, cysteine 305, and histidine 331.

It belongs to the queuine tRNA-ribosyltransferase family. As to quaternary structure, homodimer. Within each dimer, one monomer is responsible for RNA recognition and catalysis, while the other monomer binds to the replacement base PreQ1. The cofactor is Zn(2+).

It catalyses the reaction 7-aminomethyl-7-carbaguanine + guanosine(34) in tRNA = 7-aminomethyl-7-carbaguanosine(34) in tRNA + guanine. It functions in the pathway tRNA modification; tRNA-queuosine biosynthesis. Catalyzes the base-exchange of a guanine (G) residue with the queuine precursor 7-aminomethyl-7-deazaguanine (PreQ1) at position 34 (anticodon wobble position) in tRNAs with GU(N) anticodons (tRNA-Asp, -Asn, -His and -Tyr). Catalysis occurs through a double-displacement mechanism. The nucleophile active site attacks the C1' of nucleotide 34 to detach the guanine base from the RNA, forming a covalent enzyme-RNA intermediate. The proton acceptor active site deprotonates the incoming PreQ1, allowing a nucleophilic attack on the C1' of the ribose to form the product. After dissociation, two additional enzymatic reactions on the tRNA convert PreQ1 to queuine (Q), resulting in the hypermodified nucleoside queuosine (7-(((4,5-cis-dihydroxy-2-cyclopenten-1-yl)amino)methyl)-7-deazaguanosine). The polypeptide is Queuine tRNA-ribosyltransferase (Methylobacillus flagellatus (strain ATCC 51484 / DSM 6875 / VKM B-1610 / KT)).